Reading from the N-terminus, the 152-residue chain is Large-conductance mechanosensitive channel (152 aa).

A run of 2 helical transmembrane segments spans residues 14 to 34 (VIDL…VKSL) and 84 to 104 (VGQF…VFLL).

Belongs to the MscL family. Homopentamer.

Its subcellular location is the cell inner membrane. Channel that opens in response to stretch forces in the membrane lipid bilayer. May participate in the regulation of osmotic pressure changes within the cell. This Laribacter hongkongensis (strain HLHK9) protein is Large-conductance mechanosensitive channel.